A 286-amino-acid chain; its full sequence is ATP synthase gamma chain (286 aa).

This sequence belongs to the ATPase gamma chain family. As to quaternary structure, F-type ATPases have 2 components, CF(1) - the catalytic core - and CF(0) - the membrane proton channel. CF(1) has five subunits: alpha(3), beta(3), gamma(1), delta(1), epsilon(1). CF(0) has three main subunits: a, b and c.

It is found in the cell inner membrane. In terms of biological role, produces ATP from ADP in the presence of a proton gradient across the membrane. The gamma chain is believed to be important in regulating ATPase activity and the flow of protons through the CF(0) complex. The sequence is that of ATP synthase gamma chain from Pseudomonas putida (strain W619).